Here is a 343-residue protein sequence, read N- to C-terminus: Protein RecA (343 aa).

Position 64–71 (64–71 (GPESSGKT)) interacts with ATP.

This sequence belongs to the RecA family.

Its subcellular location is the cytoplasm. Its function is as follows. Can catalyze the hydrolysis of ATP in the presence of single-stranded DNA, the ATP-dependent uptake of single-stranded DNA by duplex DNA, and the ATP-dependent hybridization of homologous single-stranded DNAs. It interacts with LexA causing its activation and leading to its autocatalytic cleavage. The chain is Protein RecA from Acidiphilium cryptum (strain JF-5).